A 312-amino-acid chain; its full sequence is DNA-directed RNA polymerase subunit alpha (312 aa).

The interval 1 to 229 (MLQYQIDRID…ELFQPLATVT (229 aa)) is alpha N-terminal domain (alpha-NTD). The segment at 241–312 (SPEAQIPLEE…ISIPQSRTSV (72 aa)) is alpha C-terminal domain (alpha-CTD).

This sequence belongs to the RNA polymerase alpha chain family. In cyanobacteria the RNAP catalytic core is composed of 2 alpha, 1 beta, 1 beta', 1 gamma and 1 omega subunit. When a sigma factor is associated with the core the holoenzyme is formed, which can initiate transcription.

It catalyses the reaction RNA(n) + a ribonucleoside 5'-triphosphate = RNA(n+1) + diphosphate. DNA-dependent RNA polymerase catalyzes the transcription of DNA into RNA using the four ribonucleoside triphosphates as substrates. This Prochlorococcus marinus (strain MIT 9215) protein is DNA-directed RNA polymerase subunit alpha.